Here is an 86-residue protein sequence, read N- to C-terminus: Co-chaperonin GroES (86 aa).

Belongs to the GroES chaperonin family. In terms of assembly, heptamer of 7 subunits arranged in a ring. Interacts with the chaperonin GroEL.

It localises to the cytoplasm. In terms of biological role, together with the chaperonin GroEL, plays an essential role in assisting protein folding. The GroEL-GroES system forms a nano-cage that allows encapsulation of the non-native substrate proteins and provides a physical environment optimized to promote and accelerate protein folding. GroES binds to the apical surface of the GroEL ring, thereby capping the opening of the GroEL channel. This Campylobacter lari (strain RM2100 / D67 / ATCC BAA-1060) protein is Co-chaperonin GroES.